The sequence spans 130 residues: Glycine cleavage system H protein (130 aa).

The Lipoyl-binding domain maps to 24-106 (SVTVGITEHA…YGDGWIMRIQ (83 aa)). Lys-65 is modified (N6-lipoyllysine).

Belongs to the GcvH family. As to quaternary structure, the glycine cleavage system is composed of four proteins: P, T, L and H. The cofactor is (R)-lipoate.

The glycine cleavage system catalyzes the degradation of glycine. The H protein shuttles the methylamine group of glycine from the P protein to the T protein. The protein is Glycine cleavage system H protein of Halorhodospira halophila (strain DSM 244 / SL1) (Ectothiorhodospira halophila (strain DSM 244 / SL1)).